Consider the following 182-residue polypeptide: NADH-quinone oxidoreductase subunit I (182 aa).

4Fe-4S ferredoxin-type domains are found at residues 52–82 and 92–121; these read LTRDPDGEERCVACNLCAVACPVGCISLQKA and EFFRINFSRCIFCGLCEEACPTTAIQLTPD. Positions 62, 65, 68, 72, 101, 104, 107, and 111 each coordinate [4Fe-4S] cluster.

The protein belongs to the complex I 23 kDa subunit family. As to quaternary structure, NDH-1 is composed of 13 different subunits. Subunits NuoA, H, J, K, L, M, N constitute the membrane sector of the complex. The cofactor is [4Fe-4S] cluster.

It is found in the cell inner membrane. It carries out the reaction a quinone + NADH + 5 H(+)(in) = a quinol + NAD(+) + 4 H(+)(out). In terms of biological role, NDH-1 shuttles electrons from NADH, via FMN and iron-sulfur (Fe-S) centers, to quinones in the respiratory chain. The immediate electron acceptor for the enzyme in this species is believed to be ubiquinone. Couples the redox reaction to proton translocation (for every two electrons transferred, four hydrogen ions are translocated across the cytoplasmic membrane), and thus conserves the redox energy in a proton gradient. The chain is NADH-quinone oxidoreductase subunit I from Pseudomonas aeruginosa (strain LESB58).